The sequence spans 61 residues: Alpha-conotoxin-like Lp1.6a (61 aa).

An N-terminal signal peptide occupies residues 1-21; it reads MGMRMMFIIFLFVVLATTVVS. A propeptide spanning residues 22–44 is cleaved from the precursor; it reads FTSGRASDGRNAPANNKVSDLIR. Pyrrolidone carboxylic acid is present on Gln45. Disulfide bonds link Cys47-Cys53 and Cys48-Cys60. Cys60 is subject to Cysteine amide.

Belongs to the conotoxin A superfamily. Expressed by the venom duct.

It localises to the secreted. Functionally, alpha-conotoxins act on postsynaptic membranes, they bind to the nicotinic acetylcholine receptors (nAChR) and thus inhibit them. This is Alpha-conotoxin-like Lp1.6a from Conus leopardus (Leopard cone).